Here is a 476-residue protein sequence, read N- to C-terminus: Zinc finger CCCH domain-containing protein 6 (476 aa).

A compositionally biased stretch (low complexity) spans 1–10 (MEQPHAAAAA). Residues 1–57 (MEQPHAAAAAAGGGEGEGGASPDTGLEGPMWRMGLGGGGGGGGGGGGGDGDAAGRLP) form a disordered region. The span at 34-51 (GLGGGGGGGGGGGGGDGD) shows a compositional bias: gly residues. 3 C3H1-type zinc fingers span residues 59 to 87 (RPGE…HPRD), 108 to 136 (RAGQ…HPKQ), and 153 to 181 (RLGE…HPEF). Residues 290-301 (SSTGQSSNNQQE) show a composition bias toward polar residues. The tract at residues 290 to 309 (SSTGQSSNNQQEHGFPERPG) is disordered. C3H1-type zinc fingers lie at residues 307–335 (RPGQ…HPRE) and 353–381 (RPGA…HPMG). The interval 456 to 476 (TMMRAQTNTTSGGSSSPGGGR) is disordered.

The protein localises to the nucleus. In Oryza sativa subsp. japonica (Rice), this protein is Zinc finger CCCH domain-containing protein 6.